Here is a 1154-residue protein sequence, read N- to C-terminus: Nitric oxide synthase, inducible (1154 aa).

The segment at 22–58 (KDINNNVEKPPGATPSPSTQDDLKNHKHHNDSPQPLT) is disordered. The DINNN-motif; mediates interaction with SPSB1, SPSB2 and SPSB4 signature appears at 23–27 (DINNN). Positions 107 and 112 each coordinate Zn(2+). C197 is a binding site for heme b. Positions 260, 369, 370, and 374 each coordinate L-arginine. R378, I459, W460, and F473 together coordinate (6R)-L-erythro-5,6,7,8-tetrahydrobiopterin. Y488 lines the heme b pocket. The segment at 512 to 532 (LKVLVKAVLFASMLMRKTMAS) is calmodulin-binding. Residues 536–674 (VTILFATETG…AFRCWAVQTF (139 aa)) enclose the Flavodoxin-like domain. FMN-binding residues include T542, E543, T544, K546, and S547. A Phosphotyrosine modification is found at Y572. Residues S588, T589, S625, C632, and E658 each coordinate FMN. The FAD-binding FR-type domain occupies 727–967 (KNVFTLRLKS…VRSAGNFKLP (241 aa)). NADP(+) is bound at residue R747. FAD contacts are provided by H769, R903, Y905, S906, T921, A923, Y927, V940, C941, and S942. The NADP(+) site is built by T981, R1014, S1043, R1044, K1050, Y1052, Q1054, and D1087.

This sequence belongs to the NOS family. In terms of assembly, homodimer. Interacts with NHERF1. Interacts with GAPDH; induced by oxidatively-modified low-densitity lipoprotein (LDL(ox)). Interacts with S100A8 and S100A9 to form the iNOS-S100A8/9 transnitrosylase complex. Interacts with SPSB1, SPSB2 and SPSB4. Interacts with ELOC and CUL5 in the presence of SPSB1 or SPSB2 or SPSB4. Forms a complex with ASL, ASS1 and HSP90AA1; the complex regulates cell-autonomous L-arginine synthesis and citrulline recycling while channeling extracellular L-arginine to nitric oxide synthesis pathway. It depends on heme b as a cofactor. FAD is required as a cofactor. Requires FMN as cofactor. The cofactor is (6R)-L-erythro-5,6,7,8-tetrahydrobiopterin. Post-translationally, polyubiquitinated; mediated by SPSB1, SPSB2 and SPSB4, leading to proteasomal degradation.

The protein resides in the cytoplasm. Its subcellular location is the cytosol. The enzyme catalyses 2 L-arginine + 3 NADPH + 4 O2 + H(+) = 2 L-citrulline + 2 nitric oxide + 3 NADP(+) + 4 H2O. Regulated by calcium/calmodulin. In terms of biological role, produces nitric oxide (NO) which is a messenger molecule with diverse functions throughout the body. In macrophages, NO mediates tumoricidal and bactericidal actions. Also has nitrosylase activity and mediates cysteine S-nitrosylation of cytoplasmic target proteins such PTGS2/COX2. As component of the iNOS-S100A8/9 transnitrosylase complex involved in the selective inflammatory stimulus-dependent S-nitrosylation of GAPDH implicated in regulation of the GAIT complex activity and probably multiple targets including ANXA5, EZR, MSN and VIM. Involved in inflammation, enhances the synthesis of pro-inflammatory mediators such as IL6 and IL8. In Canis lupus familiaris (Dog), this protein is Nitric oxide synthase, inducible (NOS2).